Reading from the N-terminus, the 118-residue chain is M-zodatoxin-Lt8p (118 aa).

A signal peptide spans 1-3 (AES). Positions 4–43 (KPAESEHELAEVEEENELADLEDAVWLEHLADLSDLEEAR) are excised as a propeptide.

The protein belongs to the cationic peptide 06 (cytoinsectotoxin) family. Expressed by the venom gland.

It localises to the secreted. Functionally, insecticidal, cytolytic and antimicrobial peptide. Forms voltage-dependent, ion-permeable channels in membranes. At high concentration causes cell membrane lysis. The protein is M-zodatoxin-Lt8p (cit 1-15) of Lachesana tarabaevi (Spider).